A 249-amino-acid polypeptide reads, in one-letter code: NH(3)-dependent NAD(+) synthetase (249 aa).

Residue aspartate 34 participates in Mg(2+) binding. Arginine 110 is a deamido-NAD(+) binding site. Threonine 130 serves as a coordination point for ATP. A Mg(2+)-binding site is contributed by glutamate 135. Deamido-NAD(+) contacts are provided by lysine 143 and aspartate 150. Residues lysine 159 and serine 181 each contribute to the ATP site. 232 to 233 provides a ligand contact to deamido-NAD(+); it reads HK.

This sequence belongs to the NAD synthetase family. In terms of assembly, homodimer.

The enzyme catalyses deamido-NAD(+) + NH4(+) + ATP = AMP + diphosphate + NAD(+) + H(+). The protein operates within cofactor biosynthesis; NAD(+) biosynthesis; NAD(+) from deamido-NAD(+) (ammonia route): step 1/1. In terms of biological role, catalyzes the ATP-dependent amidation of deamido-NAD to form NAD. Uses ammonia as a nitrogen source. The protein is NH(3)-dependent NAD(+) synthetase of Picrophilus torridus (strain ATCC 700027 / DSM 9790 / JCM 10055 / NBRC 100828 / KAW 2/3).